The primary structure comprises 121 residues: MARIAGINIPPHKHAEIGLTAIFGIGRTRARQICEASGIEYSKKIKDLTDADLEKIRDQIALFTIEGDLRRETTMNIKRLMDIGCYRGFRHRRGLPMRGQRTRTNARTRKGPRKAAQSLKK.

The segment at 93–121 (RGLPMRGQRTRTNARTRKGPRKAAQSLKK) is disordered.

Belongs to the universal ribosomal protein uS13 family. Part of the 30S ribosomal subunit. Forms a loose heterodimer with protein S19. Forms two bridges to the 50S subunit in the 70S ribosome.

Located at the top of the head of the 30S subunit, it contacts several helices of the 16S rRNA. In the 70S ribosome it contacts the 23S rRNA (bridge B1a) and protein L5 of the 50S subunit (bridge B1b), connecting the 2 subunits; these bridges are implicated in subunit movement. Contacts the tRNAs in the A and P-sites. This chain is Small ribosomal subunit protein uS13, found in Variovorax paradoxus (strain S110).